The sequence spans 828 residues: Glycerol-3-phosphate acyltransferase (828 aa).

Positions 304-309 (CHRSHM) match the HXXXXD motif motif. Residues 802-828 (SMPAETSNQPEAPETPETPEPEGKTES) form a disordered region.

It belongs to the GPAT/DAPAT family.

It is found in the cell inner membrane. It catalyses the reaction sn-glycerol 3-phosphate + an acyl-CoA = a 1-acyl-sn-glycero-3-phosphate + CoA. It functions in the pathway phospholipid metabolism; CDP-diacylglycerol biosynthesis; CDP-diacylglycerol from sn-glycerol 3-phosphate: step 1/3. This chain is Glycerol-3-phosphate acyltransferase, found in Yersinia pseudotuberculosis serotype O:3 (strain YPIII).